The sequence spans 82 residues: Lectin-D2 (82 aa).

Chitin-binding type-1 domains are found at residues 1-42 and 43-82; these read APEC…QCDY and WRCG…SQCD. 4 disulfide bridges follow: Cys-4/Cys-19, Cys-13/Cys-25, Cys-18/Cys-32, and Cys-36/Cys-40. The a carbohydrate site is built by Ser-20, Trp-22, Tyr-24, and Tyr-31. A carbohydrate is bound at residue Trp-43. 4 cysteine pairs are disulfide-bonded: Cys-45-Cys-60, Cys-54-Cys-66, Cys-59-Cys-73, and Cys-77-Cys-81. Ser-61, Tyr-63, Trp-65, and His-72 together coordinate a carbohydrate.

As to quaternary structure, monomer.

In terms of biological role, N-acetyl-D-glucosamine binding lectin. Shows no hemagglutinating activity towards rabbit erythrocytes and weak activity towards trypsin-treated erythrocytes. Has mitogenic activity towards human peripheral blood lymphocytes (HPBL). The sequence is that of Lectin-D2 from Phytolacca americana (American pokeweed).